We begin with the raw amino-acid sequence, 199 residues long: Small ribosomal subunit protein uS5 (199 aa).

Positions 1–29 are disordered; the sequence is MATAGRRGGAASERRERRESRRQEASPEK. Basic and acidic residues predominate over residues 12 to 27; it reads SERRERRESRRQEASP. Residues 32–95 form the S5 DRBM domain; it reads FLERVVTINR…EEAKKHFFTV (64 aa).

It belongs to the universal ribosomal protein uS5 family. In terms of assembly, part of the 30S ribosomal subunit. Contacts proteins S4 and S8.

Its function is as follows. With S4 and S12 plays an important role in translational accuracy. Located at the back of the 30S subunit body where it stabilizes the conformation of the head with respect to the body. The chain is Small ribosomal subunit protein uS5 from Acidothermus cellulolyticus (strain ATCC 43068 / DSM 8971 / 11B).